Consider the following 441-residue polypeptide: MQENPGSIGVDGGYASNVPAFLTKLWTLVEDPETNHLICWSATGTSFHVFDQGRFAKEVLPKYFKHNNMASFVRQLNMYGFRKVVNIEQSGLVKPERDDTEFQHLYFLQGHEHLLEHIKRKVSIVKSEETKVRQEDLSKLLYEVQVLRSQQENMEMQMQDMKQQNDVLWREVVSLRQNHTQQQKVMNKLIQFLFSQMQSNSPSTVGMKRKLPLMLDDGCSTPPASKFSHNHSMESLQESFYIQSPSTESASCSTSSVMTGGPIISDVTEIPQSSSMALQMQAEESREKCLMLIKEEPVSPGVQGRAEGVPLGSCEVCAEPPVLPVAMVQSVLEGRGSNLGERRAKRPMLERPEIPDGVENVDMSLEDLQLLLRSHQQSMENNAAAMDQFTFSLPLNEWNFAEMDPNLKSELANALIPAAVSQYMFQGQEGELYPTAGYEEQ.

A DNA-binding region spans residues 17 to 121; the sequence is NVPAFLTKLW…EHLLEHIKRK (105 aa). Residues 130–205 are hydrophobic repeat HR-A/B; it reads TKVRQEDLSK…QMQSNSPSTV (76 aa).

The protein belongs to the HSF family. Predominantly expressed in the eye.

The protein localises to the nucleus. Heat-shock transcription factor that specifically binds heat shock promoter elements (HSE). Required for denucleation and organelle rupture and degradation that occur during eye lens terminal differentiation, when fiber cells that compose the lens degrade all membrane-bound organelles in order to provide lens with transparency to allow the passage of light. In this process, may regulate denucleation of lens fiber cells in part by activating dnase1l1l and dnase2b transcription. May be involved in DNA repair through the transcriptional regulation of rad51. May up-regulate TP53 protein in lens fiber cells, possibly through protein stabilization. In the eye lens, controls the expression of alpha-crystallin B chain/CRYAB and consequently may be involved in the regulation of lysosomal acidification. The protein is Heat shock factor protein 4 of Danio rerio (Zebrafish).